Reading from the N-terminus, the 494-residue chain is MTNWQQQLPLTDTQKNELDKSVLRYLNWNYKQTVRHEHAQDYESVRHAIVTLSGFLLQESVDRQEFISNNDTSNESMVDIDELLLPKKWNSIVRLQKKIIELEQNTETLVSQIKDLNTQVSELAQFKPTTSNGASAHNVLKWIPRNLPSCLINVESSVTSVKLHPNLPIVFVATDHGKLYAFDLFNYTIPLASLQSHTKAITSMDVLFTNFTNSSKKNYLVVVTASKDLQIHVFKWVSEECKFQQIRSLLGHEHIVSAVKIWQKNNDVHIASCSRDQTVKIWDFHNGWSLKTFQPHSQWVRSIDVLGDYIISGSHDTTLRLTHWPSGNGLSVGTGHEFPIEKVKFIHFIEDSPEIRFRTPSTDRYKNWGMQYCVSASRDRTIKIWEIPLPTLMAHRAPIPNPTDSNFRCVLTLKGHLSWVRDISIRGQYLFSCADDKSVRCWDLNTGQCLHVWEKLHTGFVNCLDLDVDFDSNVTPRQMMVTGGLDCKSNVFMR.

Residues 14–46 enclose the LisH domain; sequence QKNELDKSVLRYLNWNYKQTVRHEHAQDYESVR. Residues 90 to 123 are a coiled coil; that stretch reads NSIVRLQKKIIELEQNTETLVSQIKDLNTQVSEL. WD repeat units follow at residues 153–192, 196–244, 251–292, 295–334, 347–395, 415–454, and 457–492; these read NVESSVTSVKLHPNLPIVFVATDHGKLYAFDLFNYTIPLA, SHTK…CKFQ, GHEH…SLKT, PHSQWVRSIDVLGDYIISGSHDTTLRLTHWPSGNGLSVGT, HFIE…LMAH, GHLSWVRDISIRGQYLFSCADDKSVRCWDLNTGQCLHVWE, and HTGFVNCLDLDVDFDSNVTPRQMMVTGGLDCKSNVF.

The protein belongs to the WD repeat LIS1/nudF family. As to quaternary structure, self-associates. Interacts with NDL1 and dynein.

It localises to the cytoplasm. The protein localises to the cytoskeleton. Its subcellular location is the spindle pole. Its function is as follows. Positively regulates the activity of the minus-end directed microtubule motor protein dynein. Plays a central role in positioning the mitotic spindle at the bud neck during cell division. Targets cytoplasmic dynein to microtubule plus ends, thereby promoting dynein-mediated microtubule sliding along the bud cortex and consequently the movement of the mitotic spindle to the bud neck. In Saccharomyces cerevisiae (strain RM11-1a) (Baker's yeast), this protein is Nuclear distribution protein PAC1.